The primary structure comprises 300 residues: tRNA dimethylallyltransferase (300 aa).

11–18 (GPTAVGKS) lines the ATP pocket. 13-18 (TAVGKS) contributes to the substrate binding site. Residues 35 to 38 (DSIQ) form an interaction with substrate tRNA region.

The protein belongs to the IPP transferase family. Monomer. Mg(2+) serves as cofactor.

The enzyme catalyses adenosine(37) in tRNA + dimethylallyl diphosphate = N(6)-dimethylallyladenosine(37) in tRNA + diphosphate. Its function is as follows. Catalyzes the transfer of a dimethylallyl group onto the adenine at position 37 in tRNAs that read codons beginning with uridine, leading to the formation of N6-(dimethylallyl)adenosine (i(6)A). This is tRNA dimethylallyltransferase from Borrelia turicatae (strain 91E135).